Reading from the N-terminus, the 258-residue chain is DNA repair protein RecO (258 aa).

Belongs to the RecO family.

Functionally, involved in DNA repair and RecF pathway recombination. The polypeptide is DNA repair protein RecO (Oceanobacillus iheyensis (strain DSM 14371 / CIP 107618 / JCM 11309 / KCTC 3954 / HTE831)).